A 396-amino-acid chain; its full sequence is Phosphoglycerate kinase (396 aa).

Substrate is bound by residues 21–23, Arg36, 59–62, Arg119, and Arg156; these read DFN and HLGK. ATP contacts are provided by residues Lys206, Glu325, and 352–355; that span reads GGDS.

The protein belongs to the phosphoglycerate kinase family. As to quaternary structure, monomer.

It localises to the cytoplasm. It catalyses the reaction (2R)-3-phosphoglycerate + ATP = (2R)-3-phospho-glyceroyl phosphate + ADP. Its pathway is carbohydrate degradation; glycolysis; pyruvate from D-glyceraldehyde 3-phosphate: step 2/5. The protein is Phosphoglycerate kinase of Staphylococcus epidermidis (strain ATCC 35984 / DSM 28319 / BCRC 17069 / CCUG 31568 / BM 3577 / RP62A).